A 280-amino-acid polypeptide reads, in one-letter code: Putative high affinity immunoglobulin gamma Fc receptor IB (280 aa).

Positions 1–15 (MWFLTTLLLWVPVDG) are cleaved as a signal peptide. The Extracellular portion of the chain corresponds to 16 to 198 (QVDTTKAVIT…LQLPTPVWFH (183 aa)). 2 consecutive Ig-like C2-type domains span residues 22 to 101 (AVIT…LEIH) and 95 to 184 (PIQL…ISQY). Cystine bridges form between cysteine 43–cysteine 85 and cysteine 124–cysteine 168. Asparagine 59, asparagine 152, and asparagine 163 each carry an N-linked (GlcNAc...) asparagine glycan. The chain crosses the membrane as a helical span at residues 199-219 (VLFYLAVGIMFLVNTVLWVTI). The Cytoplasmic segment spans residues 220-280 (RKELKRKKKW…VHRKEPQGAT (61 aa)). Positions 258-280 (KCQEQKEEQLQEGVHRKEPQGAT) are disordered.

The protein belongs to the immunoglobulin superfamily. FCGR1 family.

It is found in the cell membrane. Functionally, may bind to the Fc region of immunoglobulins gamma with a low affinity compared to FCGR1A. May function in the humoral immune response. The protein is Putative high affinity immunoglobulin gamma Fc receptor IB of Homo sapiens (Human).